The primary structure comprises 164 residues: Interferon gamma (164 aa).

Residues 1–19 (MTCQTYNLFVLSVIMIYYG) form the signal peptide. 2 N-linked (GlcNAc...) asparagine glycosylation sites follow: asparagine 42 and asparagine 61.

This sequence belongs to the type II (or gamma) interferon family. In terms of assembly, homodimer.

Its subcellular location is the secreted. In terms of biological role, produced by lymphocytes activated by specific antigens or mitogens. IFN-gamma, in addition to having antiviral activity, has important immunoregulatory functions. It is a potent activator of macrophages, it has antiproliferative effects on transformed cells and it can potentiate the antiviral and antitumor effects of the type I interferons. The chain is Interferon gamma (IFNG) from Numida meleagris (Helmeted guineafowl).